The following is a 76-amino-acid chain: Serine proteinase inhibitor IA-2 (76 aa).

An N-acetylserine modification is found at S1.

Belongs to the protease inhibitor I9 family.

Functionally, specifically inhibits an intracellular serine proteinase (proteinase A). In Pleurotus ostreatus (Oyster mushroom), this protein is Serine proteinase inhibitor IA-2.